Here is a 501-residue protein sequence, read N- to C-terminus: Probable histidine--tRNA ligase, mitochondrial (501 aa).

Residues 32-54 (TNSNNNNNNNNNNNNNNNNNKNI) are disordered. Over residues 33 to 54 (NSNNNNNNNNNNNNNNNNNKNI) the composition is skewed to low complexity.

Belongs to the class-II aminoacyl-tRNA synthetase family.

Its subcellular location is the mitochondrion matrix. It carries out the reaction tRNA(His) + L-histidine + ATP = L-histidyl-tRNA(His) + AMP + diphosphate + H(+). This is Probable histidine--tRNA ligase, mitochondrial (mhisS) from Dictyostelium discoideum (Social amoeba).